A 450-amino-acid polypeptide reads, in one-letter code: Phosphoglucosamine mutase (450 aa).

The active-site Phosphoserine intermediate is the Ser104. Mg(2+) contacts are provided by Ser104, Asp241, Asp243, and Asp245. Ser104 is subject to Phosphoserine.

The protein belongs to the phosphohexose mutase family. Requires Mg(2+) as cofactor. Post-translationally, activated by phosphorylation.

It carries out the reaction alpha-D-glucosamine 1-phosphate = D-glucosamine 6-phosphate. Catalyzes the conversion of glucosamine-6-phosphate to glucosamine-1-phosphate. The protein is Phosphoglucosamine mutase of Renibacterium salmoninarum (strain ATCC 33209 / DSM 20767 / JCM 11484 / NBRC 15589 / NCIMB 2235).